Here is a 752-residue protein sequence, read N- to C-terminus: Pre-mRNA-processing factor 39 (752 aa).

The disordered stretch occupies residues 1–148; that stretch reads MEDSGESMTG…DPAAPQEPEL (148 aa). Residues 28–42 are compositionally biased toward polar residues; the sequence is TTGTDDVTGLSTSDL. Composition is skewed to low complexity over residues 43-56, 76-94, and 133-148; these read TTEQ…QTQP, QSAS…PPES, and EPAA…EPEL. HAT repeat units lie at residues 180–212, 214–246, and 254–289; these read NHLL…IERK, GYIQ…FLRE, and EAES…WETE. Residues 347–374 form a disordered region; sequence NKPSGDEDAETEAPGEELPPGTEDLPDP. The span at 352–361 shows a compositional bias: acidic residues; it reads DEDAETEAPG. HAT repeat units follow at residues 408–440 and 442–474; these read AFEE…FELE and GTPE…YLES. The segment covering 678–699 has biased composition (basic and acidic residues); that stretch reads SFKRKAENGSEEPDAKRQRTDD. The segment at 678–703 is disordered; it reads SFKRKAENGSEEPDAKRQRTDDQSVA. The HAT 6 repeat unit spans residues 700-731; it reads QSVASGQMMDMQANHAGYNYNNWYQYNSWGSQ.

This sequence belongs to the PRP39 family.

Its subcellular location is the nucleus. Its function is as follows. Involved in pre-mRNA splicing. This is Pre-mRNA-processing factor 39 (prpf39) from Danio rerio (Zebrafish).